The chain runs to 90 residues: Probable Fe(2+)-trafficking protein (90 aa).

The protein belongs to the Fe(2+)-trafficking protein family.

Could be a mediator in iron transactions between iron acquisition and iron-requiring processes, such as synthesis and/or repair of Fe-S clusters in biosynthetic enzymes. This Idiomarina loihiensis (strain ATCC BAA-735 / DSM 15497 / L2-TR) protein is Probable Fe(2+)-trafficking protein.